Consider the following 57-residue polypeptide: Protein YnaL (57 aa).

A disordered region spans residues 7–57; sequence LQIPVPEPIPGDPVPVPDPIPRPQPMPDPPPDEEPIKLSHRERRSARIRAC. The span at 11-35 shows a compositional bias: pro residues; sequence VPEPIPGDPVPVPDPIPRPQPMPDP. Positions 46 to 57 are enriched in basic residues; the sequence is HRERRSARIRAC.

The sequence is that of Protein YnaL from Escherichia coli (strain K12).